A 341-amino-acid chain; its full sequence is Very-long-chain 3-oxoacyl-CoA reductase (341 aa).

The chain crosses the membrane as a helical span at residues Ala-17–Val-37. Positions 63, 117, 144, 218, 222, 251, and 253 each coordinate NADP(+). Tyr-218 functions as the Proton donor in the catalytic mechanism. The active-site Lowers pKa of active site Tyr is the Lys-222.

It belongs to the short-chain dehydrogenases/reductases (SDR) family.

The protein resides in the endoplasmic reticulum membrane. It catalyses the reaction a very-long-chain (3R)-3-hydroxyacyl-CoA + NADP(+) = a very-long-chain 3-oxoacyl-CoA + NADPH + H(+). It participates in lipid metabolism; fatty acid biosynthesis. In terms of biological role, component of the microsomal membrane bound fatty acid elongation system, which produces the 26-carbon very long-chain fatty acids (VLCFA) from palmitate. Catalyzes the reduction of the 3-ketoacyl-CoA intermediate that is formed in each cycle of fatty acid elongation. VLCFAs serve as precursors for ceramide and sphingolipids. In Meyerozyma guilliermondii (strain ATCC 6260 / CBS 566 / DSM 6381 / JCM 1539 / NBRC 10279 / NRRL Y-324) (Yeast), this protein is Very-long-chain 3-oxoacyl-CoA reductase.